Reading from the N-terminus, the 190-residue chain is dCTP deaminase (190 aa).

113–118 (KSTYAR) serves as a coordination point for dCTP. Glutamate 139 acts as the Proton donor/acceptor in catalysis. DCTP contacts are provided by glutamine 158, tyrosine 172, lysine 181, and glutamine 182.

The protein belongs to the dCTP deaminase family. As to quaternary structure, homotrimer.

It catalyses the reaction dCTP + H2O + H(+) = dUTP + NH4(+). It participates in pyrimidine metabolism; dUMP biosynthesis; dUMP from dCTP (dUTP route): step 1/2. Its function is as follows. Catalyzes the deamination of dCTP to dUTP. The chain is dCTP deaminase from Chlamydia abortus (strain DSM 27085 / S26/3) (Chlamydophila abortus).